The following is a 253-amino-acid chain: Triosephosphate isomerase (253 aa).

A substrate-binding site is contributed by 9–11 (NWK). The Electrophile role is filled by histidine 97. Glutamate 169 (proton acceptor) is an active-site residue. Substrate is bound by residues glycine 175, serine 215, and 236–237 (GG).

The protein belongs to the triosephosphate isomerase family. Homodimer.

It is found in the cytoplasm. The enzyme catalyses D-glyceraldehyde 3-phosphate = dihydroxyacetone phosphate. The protein operates within carbohydrate biosynthesis; gluconeogenesis. It participates in carbohydrate degradation; glycolysis; D-glyceraldehyde 3-phosphate from glycerone phosphate: step 1/1. In terms of biological role, involved in the gluconeogenesis. Catalyzes stereospecifically the conversion of dihydroxyacetone phosphate (DHAP) to D-glyceraldehyde-3-phosphate (G3P). In Staphylococcus aureus (strain NCTC 8325 / PS 47), this protein is Triosephosphate isomerase.